A 240-amino-acid chain; its full sequence is Ribonuclease PH (240 aa).

Residues R87 and 125 to 127 (GTR) each bind phosphate.

It belongs to the RNase PH family. As to quaternary structure, homohexameric ring arranged as a trimer of dimers.

It carries out the reaction tRNA(n+1) + phosphate = tRNA(n) + a ribonucleoside 5'-diphosphate. Functionally, phosphorolytic 3'-5' exoribonuclease that plays an important role in tRNA 3'-end maturation. Removes nucleotide residues following the 3'-CCA terminus of tRNAs; can also add nucleotides to the ends of RNA molecules by using nucleoside diphosphates as substrates, but this may not be physiologically important. Probably plays a role in initiation of 16S rRNA degradation (leading to ribosome degradation) during starvation. The polypeptide is Ribonuclease PH (Ruminiclostridium cellulolyticum (strain ATCC 35319 / DSM 5812 / JCM 6584 / H10) (Clostridium cellulolyticum)).